The chain runs to 132 residues: Fluoride-specific ion channel FluC (132 aa).

A run of 4 helical transmembrane segments spans residues 5–25, 32–52, 70–90, and 105–125; these read LYIALGGALGSVGRFALSGLV, TFPWGTLVVNVVGSFIIGFFA, FVMTGVLGGFTTFSSFSLQTL, and VVGSLVLCLVAVWLGHIAAVG. The Na(+) site is built by glycine 77 and threonine 80.

Belongs to the fluoride channel Fluc/FEX (TC 1.A.43) family.

Its subcellular location is the cell inner membrane. The catalysed reaction is fluoride(in) = fluoride(out). Its activity is regulated as follows. Na(+) is not transported, but it plays an essential structural role and its presence is essential for fluoride channel function. Functionally, fluoride-specific ion channel. Important for reducing fluoride concentration in the cell, thus reducing its toxicity. This Opitutus terrae (strain DSM 11246 / JCM 15787 / PB90-1) protein is Fluoride-specific ion channel FluC.